Consider the following 412-residue polypeptide: Citrate synthase (412 aa).

Active-site residues include histidine 305 and aspartate 364.

The protein belongs to the citrate synthase family.

The enzyme catalyses oxaloacetate + acetyl-CoA + H2O = citrate + CoA + H(+). Its pathway is carbohydrate metabolism; tricarboxylic acid cycle; isocitrate from oxaloacetate: step 1/2. This chain is Citrate synthase (gltA), found in Rickettsia bellii.